We begin with the raw amino-acid sequence, 654 residues long: Endoplasmic reticulum chaperone BiP (654 aa).

A signal peptide spans 1 to 18 (MKFTVVAAALLLLCAVRA). The segment at 1–80 (MKFTVVAAAL…EGERLIGDAA (80 aa)) is required for interaction with ELAPOR1. Position 36-39 (36-39 (GTTY)) interacts with ATP. Ser86 bears the Phosphoserine mark. An ATP-binding site is contributed by Lys96. Residue Lys125 is modified to N6-acetyllysine. The interval 125-280 (KPYIQVDIGG…KKKTGKDVRK (156 aa)) is nucleotide-binding (NBD). Tyr160 is modified (3'-nitrotyrosine). N6-acetyllysine is present on Lys213. 227 to 229 (GGT) contributes to the ATP binding site. The residue at position 271 (Lys271) is an N6-acetyllysine. 293–300 (EKAKRALS) provides a ligand contact to ATP. At Lys326 the chain carries N6-acetyllysine. A Glycyl lysine isopeptide (Lys-Gly) (interchain with G-Cter in SUMO2) cross-link involves residue Lys352. An N6-acetyllysine; alternate modification is found at Lys353. Lys353 participates in a covalent cross-link: Glycyl lysine isopeptide (Lys-Gly) (interchain with G-Cter in SUMO1); alternate. 364–367 (GSTR) contacts ATP. Residues 409-419 (QDTGDLVLLDV) are interdomain linker. The tract at residues 420 to 500 (CPLTLGIETV…PRGVPQIEVT (81 aa)) is substrate-binding (SBD). Position 447 is an N6-succinyllysine (Lys447). Arg492 carries the post-translational modification Omega-N-methylarginine. O-AMP-threonine; alternate is present on Thr518. At Thr518 the chain carries Phosphothreonine; alternate. Residue Lys585 is modified to N6,N6,N6-trimethyllysine; by METTL21A; in vitro. Lys585 is modified (N6,N6-dimethyllysine; alternate). Lys585 is modified (N6-methyllysine; alternate). An N6-methyllysine modification is found at Lys591. A disordered region spans residues 631–654 (ISKLYGSGGPPPTGEEDTSEKDEL). Phosphothreonine occurs at positions 643 and 648. Positions 644–654 (GEEDTSEKDEL) are enriched in acidic residues. Ser649 is subject to Phosphoserine. Positions 651-654 (KDEL) match the Prevents secretion from ER motif.

Belongs to the heat shock protein 70 family. In terms of assembly, monomer and homooligomer; homooligomerization via the interdomain linker inactivates the chaperone activity and acts as a storage of HSPA5/BiP molecules. Interacts with DNAJC1 (via J domain). Component of an EIF2 complex at least composed of CELF1/CUGBP1, CALR, CALR3, EIF2S1, EIF2S2, HSP90B1 and HSPA5. Part of a large chaperone multiprotein complex comprising DNAJB11, HSP90B1, HSPA5, HYOU, PDIA2, PDIA4, PDIA6, PPIB, SDF2L1, UGGT1 and very small amounts of ERP29, but not, or at very low levels, CALR nor CANX. Interacts with TMEM132A and TRIM21. May form a complex with ERLEC1, OS9, SEL1L and SYVN1. Interacts with DNAJC10. Interacts with DNAJB9/ERdj4; leading to recruit HSPA5/BiP to ERN1/IRE1. Interacts with ERN1/IRE1 (via luminal domain); the interaction takes place following interaction with DNAJB9/ERdj4 and leads to inactivate ERN1/IRE1, the interaction also competitively inhibits ERN1 interaction with MANF. Interacts directly with MANF (via SAP domain); the interaction inhibits ATP binding to HSPA5/BiP and subsequent nucleotide exchange. Interacts with EIF2AK3/PERK (via luminal domain); interaction leads to inactivate EIF2AK3/PERK. Interacts with MX1. Interacts with METTL23. Interacts with CEMIP; the interaction induces calcium leakage from the endoplasmic reticulum and cell migration. Interacts with PCSK4 form; the interaction takes place in the endoplasmic reticulum. Interacts with CIPC. Interacts with CCDC88B (via C-terminus); the interaction opposes ERN1-mediated JNK activation, protecting against apoptosis. Interacts with INPP5K; necessary for INPP5K localization at the endoplasmic reticulum. Interacts with MANF; the interaction is direct. Interacts with LOXL2; leading to activate the ERN1/IRE1-XBP1 pathway of the unfolded protein response. Interacts with CLU under stressed condition; interaction increases CLU protein stability; facilitates its retrotranslocation and redistribution to the mitochondria; cooperatively suppress stress-induced apoptosis by stabilizing mitochondrial membrane integrity. Interacts with CCDC47. Interacts with CLN3. Interacts with ELAPOR1; may regulate the function of HSPA5 in apoptosis and cell proliferation. Interacts with CASP7. Interacts with ILDR2; the interaction stabilizes ILDR2 expression. Interacts with ADAM7. In terms of processing, in unstressed cells, AMPylation at Thr-518 by FICD inactivates the chaperome activity: AMPylated form is locked in a relatively inert state and only weakly stimulated by J domain-containing proteins. In response to endoplasmic reticulum stress, de-AMPylation by the same protein, FICD, restores the chaperone activity.

The protein resides in the endoplasmic reticulum lumen. Its subcellular location is the melanosome. It is found in the cytoplasm. It localises to the cell surface. It catalyses the reaction ATP + H2O = ADP + phosphate + H(+). With respect to regulation, the chaperone activity is regulated by ATP-induced allosteric coupling of the nucleotide-binding (NBD) and substrate-binding (SBD) domains. In the ADP-bound and nucleotide-free (apo) states, the two domains have little interaction. In contrast, in the ATP-bound state the two domains are tightly coupled, which results in drastically accelerated kinetics in both binding and release of polypeptide substrates. J domain-containing co-chaperones (DNAJB9/ERdj4 or DNAJC10/ERdj5) stimulate the ATPase activity and are required for efficient substrate recognition by HSPA5/BiP. Homooligomerization inactivates participating HSPA5/BiP protomers and probably act as reservoirs to store HSPA5/BiP molecules when they are not needed by the cell. Endoplasmic reticulum chaperone that plays a key role in protein folding and quality control in the endoplasmic reticulum lumen. Involved in the correct folding of proteins and degradation of misfolded proteins via its interaction with DNAJC10/ERdj5, probably to facilitate the release of DNAJC10/ERdj5 from its substrate. Acts as a key repressor of the EIF2AK3/PERK and ERN1/IRE1-mediated unfolded protein response (UPR). In the unstressed endoplasmic reticulum, recruited by DNAJB9/ERdj4 to the luminal region of ERN1/IRE1, leading to disrupt the dimerization of ERN1/IRE1, thereby inactivating ERN1/IRE1. Also binds and inactivates EIF2AK3/PERK in unstressed cells. Accumulation of misfolded protein in the endoplasmic reticulum causes release of HSPA5/BiP from ERN1/IRE1 and EIF2AK3/PERK, allowing their homodimerization and subsequent activation. Plays an auxiliary role in post-translational transport of small presecretory proteins across endoplasmic reticulum (ER). May function as an allosteric modulator for SEC61 channel-forming translocon complex, likely cooperating with SEC62 to enable the productive insertion of these precursors into SEC61 channel. Appears to specifically regulate translocation of precursors having inhibitory residues in their mature region that weaken channel gating. May also play a role in apoptosis and cell proliferation. This chain is Endoplasmic reticulum chaperone BiP, found in Rattus norvegicus (Rat).